Reading from the N-terminus, the 121-residue chain is Large ribosomal subunit protein bL12 (121 aa).

The protein belongs to the bacterial ribosomal protein bL12 family. As to quaternary structure, homodimer. Part of the ribosomal stalk of the 50S ribosomal subunit. Forms a multimeric L10(L12)X complex, where L10 forms an elongated spine to which 2 to 4 L12 dimers bind in a sequential fashion. Binds GTP-bound translation factors.

Functionally, forms part of the ribosomal stalk which helps the ribosome interact with GTP-bound translation factors. Is thus essential for accurate translation. This chain is Large ribosomal subunit protein bL12, found in Salmonella agona (strain SL483).